Reading from the N-terminus, the 108-residue chain is Large ribosomal subunit protein bL21c (108 aa).

This sequence belongs to the bacterial ribosomal protein bL21 family. Part of the 50S ribosomal subunit.

It localises to the plastid. Its subcellular location is the chloroplast. In terms of biological role, this protein binds to 23S rRNA. The protein is Large ribosomal subunit protein bL21c of Cyanidium caldarium (Red alga).